The sequence spans 1891 residues: Transcription initiation factor TFIID subunit 1 (1891 aa).

Disordered stretches follow at residues 1 to 34, 154 to 180, and 197 to 224; these read MGPG…AGGG, KLMP…GVSE, and ASEK…SESK. Positions 1–435 constitute a Protein kinase 1 domain; that stretch reads MGPGWAGLLQ…VTQLHWEDDI (435 aa). Positions 156-165 are enriched in pro residues; sequence MPPPPPPPGP. Over residues 197 to 208 the composition is skewed to low complexity; it reads ASEKVDFSSSSD. A Phosphoserine; by autocatalysis modification is found at Ser-328. Residues 535–556 are disordered; sequence PDEKEEATSNSPSKENKKESSL. A histone acetyltransferase (HAT) region spans residues 538-997; sequence KEEATSNSPS…KIPNKPTQQK (460 aa). An N6-acetyllysine modification is found at Lys-565. Residues Lys-570 and Lys-583 each participate in a glycyl lysine isopeptide (Lys-Gly) (interchain with G-Cter in SUMO2) cross-link. Disordered regions lie at residues 990–1009, 1128–1148, and 1254–1278; these read PNKP…KKTV, MLQN…QERK, and RLKR…MKER. Basic and acidic residues-rich tracts occupy residues 995–1004, 1139–1148, and 1254–1270; these read QQKDDKEPQP, SREREEQERK, and RLKR…PPEK. The segment at residues 1216 to 1294 is a DNA-binding region (HMG box); the sequence is VRIRTTKDEE…CGACGAIGHM (79 aa). The interaction with ASF1A and ASF1B stretch occupies residues 1363–1650; sequence VLKFPKQQLP…TAKEAALEEA (288 aa). The Nuclear localization signal motif lies at 1372-1379; sequence PPKKKRRV. 2 Bromo domains span residues 1397-1505 and 1519-1628; these read RRRT…LKEK and LLDD…LTEY. The Protein kinase 2 domain occupies 1446-1891; the sequence is MDLQTLRENV…AGDTDLDSDE (446 aa). Disordered stretches follow at residues 1651–1676 and 1690–1891; these read ELES…NNTS and SNLS…DSDE. Positions 1659–1668 are enriched in pro residues; that stretch reads TPGPYTPQPP. Ser-1690 and Ser-1693 each carry phosphoserine. Polar residues predominate over residues 1690–1708; that stretch reads SNLSVLDIPSATSEKQLTQ. 2 stretches are compositionally biased toward acidic residues: residues 1711 to 1723 and 1741 to 1756; these read GDGD…EEEG and EGED…EEGD. Over residues 1764–1778 the composition is skewed to low complexity; sequence LSESGSDSDVESGSL. Ser-1799, Ser-1802, and Ser-1820 each carry phosphoserine. Positions 1830–1840 are enriched in polar residues; that stretch reads KSNTQDTSFSS. Over residues 1846 to 1855 the composition is skewed to acidic residues; that stretch reads VSEEEEDEEE. Residue Ser-1847 is modified to Phosphoserine. Residues 1858 to 1867 show a composition bias toward polar residues; sequence SGPSVLSQVH.

Belongs to the TAF1 family. In terms of assembly, component of the TFIID basal transcription factor complex, composed of TATA-box-binding protein TBP, and a number of TBP-associated factors (TAFs). TFIID consists of at least TBP, TAF1, TAF2, TAF3, TAF4, TAF5, TAF6, TAF7, TAF8, TAF9, TAF10, TAF11, TAF12 and TAF13. Interacts with TAF7; the interaction is direct. TAF1, when part of the TFIID complex, interacts with C-terminus of TP53. Part of a TFIID-containing RNA polymerase II pre-initiation complex that is composed of TBP and at least GTF2A1, GTF2A2, GTF2E1, GTF2E2, GTF2F1, GTF2H2, GTF2H3, GTF2H4, GTF2H5, GTF2B, TCEA1, ERCC2, ERCC3, TAF1, TAF2, TAF3, TAF4, TAF5, TAF6, TAF7, TAF8, TAF9, TAF10, TAF11, TAF12 and TAF13. Component of some MLL1/MLL complex, at least composed of the core components KMT2A/MLL1, ASH2L, HCFC1/HCF1, WDR5 and RBBP5, as well as the facultative components BACC1, CHD8, E2F6, HSP70, INO80C, KANSL1, LAS1L, MAX, MCRS1, MGA, KAT8/MOF, PELP1, PHF20, PRP31, RING2, RUVB1/TIP49A, RUVB2/TIP49B, SENP3, TAF1, TAF4, TAF6, TAF7, TAF9 and TEX10. RB1 interacts with the N-terminal domain of TAF1. Interacts with ASF1A and ASF1B. Interacts (via bromo domains) with acetylated lysine residues on the N-terminus of histone H1.4, H2A, H2B, H3 and H4 (in vitro). It depends on Mg(2+) as a cofactor. In terms of processing, phosphorylated by casein kinase II in vitro.

It is found in the nucleus. The enzyme catalyses L-seryl-[protein] + ATP = O-phospho-L-seryl-[protein] + ADP + H(+). It catalyses the reaction L-threonyl-[protein] + ATP = O-phospho-L-threonyl-[protein] + ADP + H(+). It carries out the reaction L-lysyl-[protein] + acetyl-CoA = N(6)-acetyl-L-lysyl-[protein] + CoA + H(+). Autophosphorylates on Ser residues. Inhibited by retinoblastoma tumor suppressor protein, RB1. Binding to TAF1 or CIITA inhibits the histone acetyltransferase activity. The TFIID basal transcription factor complex plays a major role in the initiation of RNA polymerase II (Pol II)-dependent transcription. TFIID recognizes and binds promoters with or without a TATA box via its subunit TBP, a TATA-box-binding protein, and promotes assembly of the pre-initiation complex (PIC). The TFIID complex consists of TBP and TBP-associated factors (TAFs), including TAF1, TAF2, TAF3, TAF4, TAF5, TAF6, TAF7, TAF8, TAF9, TAF10, TAF11, TAF12 and TAF13. TAF1 is the largest component and core scaffold of the TFIID complex, involved in nucleating complex assembly. TAF1 forms a promoter DNA binding subcomplex of TFIID, together with TAF7 and TAF2. Contains novel N- and C-terminal Ser/Thr kinase domains which can autophosphorylate or transphosphorylate other transcription factors. Phosphorylates TP53 on 'Thr-55' which leads to MDM2-mediated degradation of TP53. Phosphorylates GTF2A1 and GTF2F1 on Ser residues. Possesses DNA-binding activity. Exhibits histone acetyltransferase activity towards histones H3 and H4. Essential for progression of the G1 phase of the cell cycle. The polypeptide is Transcription initiation factor TFIID subunit 1 (Mus musculus (Mouse)).